The chain runs to 352 residues: MIRKAIARVVERQDLSEAEMIEVMDQVMSGGATPAQIASFITALRMKGETVDEITGAARVMRDRALPIRVGKSVLGIDRDDINLDRETILDTCGTGGSGTNSFNISTTVAFIVSACGVKVAKHGNRAVSSSCGSADVLEALGVNLDVTPEVVERSIAQIGIGFLFAPALHGAMKHAIGPRREIGIRTIFNILGPLTNPAGADCQVLGVYREDLVEKLAQVLKKLGCRSGFVVHGSDGMDEITLTGESTVAEITADGVKLSKVTPEQFGLERAPLTELHGGDAQGNAVIVRDILSGKDGAKRRIVLLNAGYALVATGKAKDVAEGIRLAAETIDSGAAMKQLERLVALTNEAE.

5-phospho-alpha-D-ribose 1-diphosphate is bound by residues G94, 97 to 98 (GS), S102, 104 to 107 (NIST), 122 to 130 (KHGNRAVSS), and S134. G94 serves as a coordination point for anthranilate. S106 is a Mg(2+) binding site. N125 lines the anthranilate pocket. R180 contacts anthranilate. Mg(2+)-binding residues include D239 and E240.

It belongs to the anthranilate phosphoribosyltransferase family. In terms of assembly, homodimer. Requires Mg(2+) as cofactor.

It carries out the reaction N-(5-phospho-beta-D-ribosyl)anthranilate + diphosphate = 5-phospho-alpha-D-ribose 1-diphosphate + anthranilate. The protein operates within amino-acid biosynthesis; L-tryptophan biosynthesis; L-tryptophan from chorismate: step 2/5. Catalyzes the transfer of the phosphoribosyl group of 5-phosphorylribose-1-pyrophosphate (PRPP) to anthranilate to yield N-(5'-phosphoribosyl)-anthranilate (PRA). The polypeptide is Anthranilate phosphoribosyltransferase (Geobacter sp. (strain M21)).